The primary structure comprises 224 residues: Heme response regulator HssR (224 aa).

The Response regulatory domain maps to 3–116 (QCLVVDDDSR…ELIFRIRAVL (114 aa)). Asp52 bears the 4-aspartylphosphate mark. Residues 124–222 (NSEMTIGNLT…VRGQGYKVEN (99 aa)) constitute a DNA-binding region (ompR/PhoB-type).

Phosphorylated by HssS.

It localises to the cytoplasm. In terms of biological role, member of the two-component regulatory system HssS/HssR involved in intracellular heme homeostasis and tempering of staphylococcal virulence. Phosphorylated HssR binds to a direct repeat sequence within hrtAB promoter and activates the expression of hrtAB, an efflux pump, in response to extracellular heme, hemin, hemoglobin or blood. The chain is Heme response regulator HssR (hssR) from Staphylococcus aureus (strain bovine RF122 / ET3-1).